The sequence spans 175 residues: NADH-ubiquinone oxidoreductase chain 6 (175 aa).

The next 5 helical transmembrane spans lie at Met-1–Ser-21, Ser-25–Leu-45, Gly-48–Phe-68, Thr-88–Ile-108, and Tyr-149–Met-169.

The protein belongs to the complex I subunit 6 family. Core subunit of respiratory chain NADH dehydrogenase (Complex I) which is composed of 45 different subunits.

It localises to the mitochondrion inner membrane. The enzyme catalyses a ubiquinone + NADH + 5 H(+)(in) = a ubiquinol + NAD(+) + 4 H(+)(out). Core subunit of the mitochondrial membrane respiratory chain NADH dehydrogenase (Complex I) which catalyzes electron transfer from NADH through the respiratory chain, using ubiquinone as an electron acceptor. Essential for the catalytic activity and assembly of complex I. The chain is NADH-ubiquinone oxidoreductase chain 6 (MT-ND6) from Urotrichus talpoides (Japanese shrew mole).